The following is a 296-amino-acid chain: Probable xyloglucan endotransglucosylase/hydrolase 1 (296 aa).

A signal peptide spans 1-22 (MGIIKGVLFSIVLINLSLVVFC). The 199-residue stretch at 23–221 (GYPRRPVDVP…WANAPFTASY (199 aa)) folds into the GH16 domain. Glu107 (nucleophile) is an active-site residue. The active-site Proton donor is Glu111. Glu111 contacts xyloglucan. Residue Asn115 is glycosylated (N-linked (GlcNAc...) asparagine). Residues 124–126 (QTN), 134–136 (NRE), 200–201 (DW), and Gly205 contribute to the xyloglucan site. 2 disulfide bridges follow: Cys229–Cys240 and Cys277–Cys290. Residue Arg282 participates in xyloglucan binding.

This sequence belongs to the glycosyl hydrolase 16 family. XTH group 1 subfamily. Post-translationally, contains at least one intrachain disulfide bond essential for its enzymatic activity.

It localises to the secreted. Its subcellular location is the cell wall. The protein resides in the extracellular space. It is found in the apoplast. It carries out the reaction breaks a beta-(1-&gt;4) bond in the backbone of a xyloglucan and transfers the xyloglucanyl segment on to O-4 of the non-reducing terminal glucose residue of an acceptor, which can be a xyloglucan or an oligosaccharide of xyloglucan.. Catalyzes xyloglucan endohydrolysis (XEH) and/or endotransglycosylation (XET). Cleaves and religates xyloglucan polymers, an essential constituent of the primary cell wall, and thereby participates in cell wall construction of growing tissues. The polypeptide is Probable xyloglucan endotransglucosylase/hydrolase 1 (XTH1) (Solanum lycopersicum (Tomato)).